The following is a 250-amino-acid chain: Large ribosomal subunit protein uL29m (250 aa).

A mitochondrion-targeting transit peptide spans 1 to 24 (MRPGAASIRTTGSVLAFLVPSAQC). Residues 66 to 86 (VLSKKGSGDQPPKPVPITEKV) form a disordered region.

Belongs to the universal ribosomal protein uL29 family. As to quaternary structure, component of the mitochondrial large ribosomal subunit. Mature mitochondrial ribosomes consist of a small (37S) and a large (54S) subunit. The 37S subunit contains at least 33 different proteins and 1 molecule of RNA (15S). The 54S subunit contains at least 45 different proteins and 1 molecule of RNA (21S).

It localises to the mitochondrion. This is Large ribosomal subunit protein uL29m (MRPL4) from Phaeosphaeria nodorum (strain SN15 / ATCC MYA-4574 / FGSC 10173) (Glume blotch fungus).